A 244-amino-acid polypeptide reads, in one-letter code: 1-(5-phosphoribosyl)-5-[(5-phosphoribosylamino)methylideneamino] imidazole-4-carboxamide isomerase (244 aa).

Catalysis depends on Asp-8, which acts as the Proton acceptor. Catalysis depends on Asp-129, which acts as the Proton donor.

The protein belongs to the HisA/HisF family.

The protein resides in the cytoplasm. It carries out the reaction 1-(5-phospho-beta-D-ribosyl)-5-[(5-phospho-beta-D-ribosylamino)methylideneamino]imidazole-4-carboxamide = 5-[(5-phospho-1-deoxy-D-ribulos-1-ylimino)methylamino]-1-(5-phospho-beta-D-ribosyl)imidazole-4-carboxamide. It functions in the pathway amino-acid biosynthesis; L-histidine biosynthesis; L-histidine from 5-phospho-alpha-D-ribose 1-diphosphate: step 4/9. This is 1-(5-phosphoribosyl)-5-[(5-phosphoribosylamino)methylideneamino] imidazole-4-carboxamide isomerase from Thermodesulfovibrio yellowstonii (strain ATCC 51303 / DSM 11347 / YP87).